The sequence spans 531 residues: Cytochrome P450 monooxygenase peniB (531 aa).

A helical transmembrane segment spans residues isoleucine 30–phenylalanine 48. Cysteine 445 is a binding site for heme.

This sequence belongs to the cytochrome P450 family. The cofactor is heme.

Its subcellular location is the membrane. It carries out the reaction silphinene-15-oate + 2 reduced [NADPH--hemoprotein reductase] + 2 O2 = gamma-lactone-2-keto[5.5.5.5]fenestrane + 2 oxidized [NADPH--hemoprotein reductase] + 3 H2O + H(+). It functions in the pathway secondary metabolite biosynthesis; terpenoid biosynthesis. Functionally, cytochrome P450 monooxygenase; part of the gene cluster that mediates the biosynthesis of penifulvin A, a potent insecticidal sesquiterpene that features a [5.5.5.6]dioxafenestrane ring. Within the pathway, peniB catalyzes the multi-step oxidation of silphinene to synthesize gamma-lactone-2-keto[5.5.5.5]fenestrane, including oxidation of the C15 methylgroup in silphinene to form silphinene-15-oic acid, activationof the C1-C2 double bond to form the gamma-lactone-2-hydroxy[5.5.5.5]fenestrane, and dehydrogenation of the hydroxy group at C2 of gamma-lactone-2-hydroxy[5.5.5.5]fenestrane to generate gamma-lactone-2-keto[5.5.5.5]fenestrane. The first step of the pathway is performed by the sesquiterpene cyclase peniA that generates the angular triquinane scaffold silphinene via cyclization of the linear farnesyl pyrophosphate (FPP). The cytochrome P450 monooxygenase peniB and the flavin-dependent monooxygenase peniC then catalyze a series of oxidation reactions to transform silphinene into penifulvin A. This is Cytochrome P450 monooxygenase peniB from Penicillium patulum (Penicillium griseofulvum).